Reading from the N-terminus, the 340-residue chain is HTH-type transcriptional regulator PtxS (340 aa).

The HTH lacI-type domain occupies 12-67 (VTISEVAQAAGVSKATVSRYIGGDRQLLADATAQRIEAVIEQLGYRPNRMASALKR). Positions 14–33 (ISEVAQAAGVSKATVSRYIG) form a DNA-binding region, H-T-H motif.

As to quaternary structure, homodimer.

Its activity is regulated as follows. 2-ketogluconate acts as a molecular effector and causes dissociation of PtxS from its target promoter. Glucose negatively affects the molecular binding of PtxS and 2KGA, and gluconic acid inhibits the PtxS-2KGA binding reaction. Its function is as follows. Involved in the regulation of 2-ketogluconic acid metabolism via the control of the expression of the kgu operon. Binds directly to a 14-bp palindrome sequence via its conserved HTH motif. The chain is HTH-type transcriptional regulator PtxS from Pseudomonas plecoglossicida.